Reading from the N-terminus, the 371-residue chain is Glutamate 5-kinase (371 aa).

ATP is bound at residue K8. Substrate is bound by residues S49, D136, and N149. ATP-binding positions include 169–170 (TD) and 213–219 (TGGMATK). The 79-residue stretch at 278-356 (TGKLILDDGA…EDIPQVLGYA (79 aa)) folds into the PUA domain.

This sequence belongs to the glutamate 5-kinase family.

Its subcellular location is the cytoplasm. It catalyses the reaction L-glutamate + ATP = L-glutamyl 5-phosphate + ADP. It functions in the pathway amino-acid biosynthesis; L-proline biosynthesis; L-glutamate 5-semialdehyde from L-glutamate: step 1/2. Catalyzes the transfer of a phosphate group to glutamate to form L-glutamate 5-phosphate. The chain is Glutamate 5-kinase from Acaryochloris marina (strain MBIC 11017).